The chain runs to 109 residues: UPF0060 membrane protein PA3275 (109 aa).

Transmembrane regions (helical) follow at residues 5–25 (FWFV…YLWL), 27–47 (LGKS…FALL), 59–79 (AYAA…AFVE), and 84–104 (LWSD…VLFG).

Belongs to the UPF0060 family.

Its subcellular location is the cell inner membrane. This chain is UPF0060 membrane protein PA3275, found in Pseudomonas aeruginosa (strain ATCC 15692 / DSM 22644 / CIP 104116 / JCM 14847 / LMG 12228 / 1C / PRS 101 / PAO1).